The following is a 260-amino-acid chain: UPF0246 protein Bcep1808_2308 (260 aa).

This sequence belongs to the UPF0246 family.

The chain is UPF0246 protein Bcep1808_2308 from Burkholderia vietnamiensis (strain G4 / LMG 22486) (Burkholderia cepacia (strain R1808)).